Consider the following 89-residue polypeptide: MPISKEVNLEEIIKQNVSKSKFAFRDNDVISNNIPNVKPIRSKMTIKQISVGLKYEYWIEFYSILDKKGLTASGFIRTLIMEYIEASKK.

This is an uncharacterized protein from Borreliella burgdorferi (strain ATCC 35210 / DSM 4680 / CIP 102532 / B31) (Borrelia burgdorferi).